The following is a 1858-amino-acid chain: Protein ROS1C (1858 aa).

A compositionally biased stretch (basic and acidic residues) spans 347–356 (TEALKGEDAP). 2 disordered regions span residues 347-416 (TEAL…AEPF) and 1288-1309 (PDTA…KNSE). Composition is skewed to basic residues over residues 360–370 (LKTRRRKHRPK) and 394–404 (KPKRKYVRKNR). [4Fe-4S] cluster is bound by residues Cys1492, Cys1499, Cys1502, and Cys1508.

It belongs to the DNA glycosylase family. DEMETER subfamily. Requires [4Fe-4S] cluster as cofactor. Expressed in pistils and immature seeds. Expressed a low levels in roots, leaves and anthers.

It is found in the nucleus. Its function is as follows. Bifunctional DNA glycosylase/lyase, which excises 5-methylcytosine (5-meC) and 5-hydroxymethylcytosine (5-hmeC), leaving an apyrimidinic (AP) site that is subsequently incised by the lyase activity. Is responsible for the demethylation of methylated cytosine residues of Tos17 retrotransposon DNA. Demethylation of Tos17 cytosine residues promotes its transposition. May be involved in seed development. The polypeptide is Protein ROS1C (Oryza sativa subsp. japonica (Rice)).